Consider the following 331-residue polypeptide: NADH-quinone oxidoreductase subunit H (331 aa).

A run of 8 helical transmembrane segments spans residues 7-27 (ALVT…AVVI), 81-101 (MIFT…FAIV), 114-134 (IGIL…LFAG), 154-174 (ISYE…VGSF), 187-207 (VWFI…GVAV), 238-258 (FFVG…TLFF), 271-291 (WLSF…FILI), and 310-330 (VCLP…LAAA).

This sequence belongs to the complex I subunit 1 family. As to quaternary structure, NDH-1 is composed of 13 different subunits. Subunits NuoA, H, J, K, L, M, N constitute the membrane sector of the complex.

The protein resides in the cell inner membrane. The enzyme catalyses a quinone + NADH + 5 H(+)(in) = a quinol + NAD(+) + 4 H(+)(out). In terms of biological role, NDH-1 shuttles electrons from NADH, via FMN and iron-sulfur (Fe-S) centers, to quinones in the respiratory chain. The immediate electron acceptor for the enzyme in this species is believed to be ubiquinone. Couples the redox reaction to proton translocation (for every two electrons transferred, four hydrogen ions are translocated across the cytoplasmic membrane), and thus conserves the redox energy in a proton gradient. This subunit may bind ubiquinone. This Pseudomonas aeruginosa (strain ATCC 15692 / DSM 22644 / CIP 104116 / JCM 14847 / LMG 12228 / 1C / PRS 101 / PAO1) protein is NADH-quinone oxidoreductase subunit H.